We begin with the raw amino-acid sequence, 288 residues long: Phenazine biosynthesis-like domain-containing protein (288 aa).

Residue glutamate 46 is part of the active site.

Belongs to the PhzF family. As to quaternary structure, interacts with UNRIP/MAWD.

The protein is Phenazine biosynthesis-like domain-containing protein (Pbld) of Rattus norvegicus (Rat).